We begin with the raw amino-acid sequence, 347 residues long: Lipoyl synthase (347 aa).

7 residues coordinate [4Fe-4S] cluster: Cys77, Cys82, Cys88, Cys103, Cys107, Cys110, and Ser317. Positions 89 to 306 (FADGTATFMI…MDYGKKIGFF (218 aa)) constitute a Radical SAM core domain.

It belongs to the radical SAM superfamily. Lipoyl synthase family. The cofactor is [4Fe-4S] cluster.

It is found in the cytoplasm. It carries out the reaction [[Fe-S] cluster scaffold protein carrying a second [4Fe-4S](2+) cluster] + N(6)-octanoyl-L-lysyl-[protein] + 2 oxidized [2Fe-2S]-[ferredoxin] + 2 S-adenosyl-L-methionine + 4 H(+) = [[Fe-S] cluster scaffold protein] + N(6)-[(R)-dihydrolipoyl]-L-lysyl-[protein] + 4 Fe(3+) + 2 hydrogen sulfide + 2 5'-deoxyadenosine + 2 L-methionine + 2 reduced [2Fe-2S]-[ferredoxin]. It functions in the pathway protein modification; protein lipoylation via endogenous pathway; protein N(6)-(lipoyl)lysine from octanoyl-[acyl-carrier-protein]: step 2/2. In terms of biological role, catalyzes the radical-mediated insertion of two sulfur atoms into the C-6 and C-8 positions of the octanoyl moiety bound to the lipoyl domains of lipoate-dependent enzymes, thereby converting the octanoylated domains into lipoylated derivatives. The protein is Lipoyl synthase of Psychrobacter cryohalolentis (strain ATCC BAA-1226 / DSM 17306 / VKM B-2378 / K5).